The primary structure comprises 498 residues: ATP synthase subunit beta, chloroplastic (498 aa).

172 to 179 (GGAGVGKT) contacts ATP.

It belongs to the ATPase alpha/beta chains family. In terms of assembly, F-type ATPases have 2 components, CF(1) - the catalytic core - and CF(0) - the membrane proton channel. CF(1) has five subunits: alpha(3), beta(3), gamma(1), delta(1), epsilon(1). CF(0) has four main subunits: a(1), b(1), b'(1) and c(9-12).

It localises to the plastid. The protein resides in the chloroplast thylakoid membrane. It carries out the reaction ATP + H2O + 4 H(+)(in) = ADP + phosphate + 5 H(+)(out). Produces ATP from ADP in the presence of a proton gradient across the membrane. The catalytic sites are hosted primarily by the beta subunits. The polypeptide is ATP synthase subunit beta, chloroplastic (Buxus microphylla (Littleleaf boxwood)).